The primary structure comprises 104 residues: Turripeptide OL55-like (104 aa).

In terms of processing, contains 8 disulfide bonds. As to expression, expressed by the venom duct.

It is found in the secreted. Its function is as follows. Acts as a neurotoxin by inhibiting an ion channel. This is Turripeptide OL55-like from Iotyrris cingulifera (Sea snail).